The primary structure comprises 423 residues: Adenylosuccinate synthetase (423 aa).

GTP-binding positions include 11 to 17 (GDEGKGK) and 39 to 41 (GHT). Asp12 serves as the catalytic Proton acceptor. Mg(2+) contacts are provided by Asp12 and Gly39. Residues 12 to 15 (DEGK), 37 to 40 (NAGH), Thr129, Arg143, Asn219, Thr234, and Arg298 contribute to the IMP site. The Proton donor role is filled by His40. Substrate is bound at residue 294-300 (VTTGRRR). GTP contacts are provided by residues Arg300, 326 to 328 (KLD), and 411 to 413 (GTG).

This sequence belongs to the adenylosuccinate synthetase family. In terms of assembly, homodimer. Mg(2+) serves as cofactor.

It localises to the cytoplasm. The enzyme catalyses IMP + L-aspartate + GTP = N(6)-(1,2-dicarboxyethyl)-AMP + GDP + phosphate + 2 H(+). It participates in purine metabolism; AMP biosynthesis via de novo pathway; AMP from IMP: step 1/2. Plays an important role in the de novo pathway and in the salvage pathway of purine nucleotide biosynthesis. Catalyzes the first committed step in the biosynthesis of AMP from IMP. This chain is Adenylosuccinate synthetase, found in Penicillium rubens (strain ATCC 28089 / DSM 1075 / NRRL 1951 / Wisconsin 54-1255) (Penicillium chrysogenum).